Consider the following 312-residue polypeptide: MEQHNLTTVNEFILTGITDIAELQAPLFALFLMIYVISVMGNLGMIVLTKLDSRLQTPMYFFLRHLAFMDLGYSTTVGPKMLVNFVVDKNIISYYFCATQLAFFLVFIGSELFILSAMSYDLYVAICNPLLYTVIMSRRVCQVLVAIPYLYCTFISLLVTIKIFTLSFCGYNVISHFYCDSLPLLPLLCSNTHEIELIILIFAAIDLISSLLIVLLSYLLILVAILRMNSAGRQKAFSTCGAHLTVVIVFYGTLLFMYVQPKSSHSFDTDKVASIFYTLVIPMLNPLIYSLRNKDVKYALRRTWNNLCNIFV.

Topologically, residues 1 to 25 (MEQHNLTTVNEFILTGITDIAELQA) are extracellular. The N-linked (GlcNAc...) asparagine glycan is linked to N5. A helical transmembrane segment spans residues 26–46 (PLFALFLMIYVISVMGNLGMI). At 47–54 (VLTKLDSR) the chain is on the cytoplasmic side. A helical transmembrane segment spans residues 55-75 (LQTPMYFFLRHLAFMDLGYST). The Extracellular segment spans residues 76 to 99 (TVGPKMLVNFVVDKNIISYYFCAT). The cysteines at positions 97 and 189 are disulfide-linked. A helical transmembrane segment spans residues 100 to 120 (QLAFFLVFIGSELFILSAMSY). Over 121 to 139 (DLYVAICNPLLYTVIMSRR) the chain is Cytoplasmic. A helical transmembrane segment spans residues 140-160 (VCQVLVAIPYLYCTFISLLVT). Residues 161–197 (IKIFTLSFCGYNVISHFYCDSLPLLPLLCSNTHEIEL) are Extracellular-facing. A helical transmembrane segment spans residues 198–217 (IILIFAAIDLISSLLIVLLS). Residues 218 to 236 (YLLILVAILRMNSAGRQKA) lie on the Cytoplasmic side of the membrane. A helical transmembrane segment spans residues 237-257 (FSTCGAHLTVVIVFYGTLLFM). Residues 258–270 (YVQPKSSHSFDTD) lie on the Extracellular side of the membrane. A helical transmembrane segment spans residues 271–291 (KVASIFYTLVIPMLNPLIYSL). The Cytoplasmic portion of the chain corresponds to 292–312 (RNKDVKYALRRTWNNLCNIFV).

It belongs to the G-protein coupled receptor 1 family.

The protein resides in the cell membrane. Functionally, odorant receptor. The chain is Olfactory receptor 8K3 (OR8K3) from Homo sapiens (Human).